Reading from the N-terminus, the 711-residue chain is Ribosomal RNA large subunit methyltransferase K/L (711 aa).

The region spanning 42-153 is the THUMP domain; it reads DAQRAVLWSR…KGRATISVDL (112 aa).

The protein belongs to the methyltransferase superfamily. RlmKL family.

It is found in the cytoplasm. It carries out the reaction guanosine(2445) in 23S rRNA + S-adenosyl-L-methionine = N(2)-methylguanosine(2445) in 23S rRNA + S-adenosyl-L-homocysteine + H(+). It catalyses the reaction guanosine(2069) in 23S rRNA + S-adenosyl-L-methionine = N(2)-methylguanosine(2069) in 23S rRNA + S-adenosyl-L-homocysteine + H(+). Its function is as follows. Specifically methylates the guanine in position 2445 (m2G2445) and the guanine in position 2069 (m7G2069) of 23S rRNA. This Xanthomonas oryzae pv. oryzae (strain MAFF 311018) protein is Ribosomal RNA large subunit methyltransferase K/L.